A 685-amino-acid polypeptide reads, in one-letter code: Small ribosomal subunit protein mS39 (685 aa).

The transit peptide at 1–10 (MAAAAVAARR) directs the protein to the mitochondrion. At Lys-127 the chain carries N6-acetyllysine. PPR repeat units lie at residues 150 to 184 (IEDVSEAALEERIRLRKVRASVDMFDQLLQAGTTV), 185 to 220 (SLETTNSLLDLLCYYGDQEPPADYPFQQTEHLENLE), 254 to 288 (NARSYCTMIRGMVKHRAYAQALNVYTELLNNRLSA), 289 to 329 (DVYT…KVKP), 330 to 366 (NLQTFNTILKGLRKCYSLGRIPALQILREMKHIGIEP), 367 to 407 (SLAT…TFSP), 412 to 446 (DGRFFQLAMSVCSSLRDLELAYQVHRLLNTGDNRK), 454 to 488 (RKVYYSKFFSLICSLEQIDVTLKWYKDLIPSVFLP), 489 to 523 (HYQIFIGLLQALDVANRLELVPQIWKDSKEYSHTF), and 572 to 606 (PANPLQYIAVLFLRGGRSQEAWKMLELFKKHKKIP). Positions 663-685 (LGNLTELNSSDGESSSDSDSDDK) are disordered. Acidic residues predominate over residues 676 to 685 (SSSDSDSDDK).

This sequence belongs to the mitochondrion-specific ribosomal protein mS39 family. Component of the mitochondrial ribosome small subunit (28S) which comprises a 12S rRNA and about 30 distinct proteins. Associated with the 12S mitochondrial rRNA (12S mt-rRNA).

Its subcellular location is the mitochondrion. In terms of biological role, mitochondrial RNA-binding protein that has a role in mitochondrial translation. This is Small ribosomal subunit protein mS39 (Ptcd3) from Mus musculus (Mouse).